A 456-amino-acid polypeptide reads, in one-letter code: Bifunctional protein GlmU (456 aa).

The segment at 1 to 229 (MLNNAMSVVI…LSEVEGVNNR (229 aa)) is pyrophosphorylase. UDP-N-acetyl-alpha-D-glucosamine-binding positions include 11 to 14 (LAAG), Lys-25, Gln-76, 81 to 82 (GT), 103 to 105 (YGD), Gly-140, Glu-154, Asn-169, and Asn-227. Asp-105 provides a ligand contact to Mg(2+). Asn-227 contributes to the Mg(2+) binding site. The tract at residues 230–250 (LQLSRLERVYQFEQAEKLLLA) is linker. An N-acetyltransferase region spans residues 251 to 456 (GVMLRDPARF…EGWRRPVKKK (206 aa)). UDP-N-acetyl-alpha-D-glucosamine-binding residues include Arg-333 and Lys-351. The active-site Proton acceptor is the His-363. UDP-N-acetyl-alpha-D-glucosamine contacts are provided by Tyr-366 and Asn-377. Acetyl-CoA contacts are provided by residues Ala-380, 386 to 387 (NY), Ser-405, Ala-423, and Arg-440.

It in the N-terminal section; belongs to the N-acetylglucosamine-1-phosphate uridyltransferase family. The protein in the C-terminal section; belongs to the transferase hexapeptide repeat family. As to quaternary structure, homotrimer. It depends on Mg(2+) as a cofactor.

The protein resides in the cytoplasm. The catalysed reaction is alpha-D-glucosamine 1-phosphate + acetyl-CoA = N-acetyl-alpha-D-glucosamine 1-phosphate + CoA + H(+). It catalyses the reaction N-acetyl-alpha-D-glucosamine 1-phosphate + UTP + H(+) = UDP-N-acetyl-alpha-D-glucosamine + diphosphate. It participates in nucleotide-sugar biosynthesis; UDP-N-acetyl-alpha-D-glucosamine biosynthesis; N-acetyl-alpha-D-glucosamine 1-phosphate from alpha-D-glucosamine 6-phosphate (route II): step 2/2. Its pathway is nucleotide-sugar biosynthesis; UDP-N-acetyl-alpha-D-glucosamine biosynthesis; UDP-N-acetyl-alpha-D-glucosamine from N-acetyl-alpha-D-glucosamine 1-phosphate: step 1/1. The protein operates within bacterial outer membrane biogenesis; LPS lipid A biosynthesis. Catalyzes the last two sequential reactions in the de novo biosynthetic pathway for UDP-N-acetylglucosamine (UDP-GlcNAc). The C-terminal domain catalyzes the transfer of acetyl group from acetyl coenzyme A to glucosamine-1-phosphate (GlcN-1-P) to produce N-acetylglucosamine-1-phosphate (GlcNAc-1-P), which is converted into UDP-GlcNAc by the transfer of uridine 5-monophosphate (from uridine 5-triphosphate), a reaction catalyzed by the N-terminal domain. This chain is Bifunctional protein GlmU, found in Escherichia coli O7:K1 (strain IAI39 / ExPEC).